A 190-amino-acid chain; its full sequence is Large ribosomal subunit protein eL19 (190 aa).

Disordered regions lie at residues 56 to 85 (TVHSRSRARALKESKRAGRHMGYGKRKGTK) and 166 to 190 (NRAARERRQQRLAEKKEALFAEAAN). Over residues 72 to 83 (AGRHMGYGKRKG) the composition is skewed to basic residues. Residues 166–184 (NRAARERRQQRLAEKKEAL) are compositionally biased toward basic and acidic residues.

The protein belongs to the eukaryotic ribosomal protein eL19 family. Component of the large ribosomal subunit. Mature ribosomes consist of a small (40S) and a large (60S) subunit. The 40S subunit contains about 32 different proteins and 1 molecule of RNA (18S). The 60S subunit contains 45 different proteins and 3 molecules of RNA (25S, 5.8S and 5S).

Its subcellular location is the cytoplasm. Component of the ribosome, a large ribonucleoprotein complex responsible for the synthesis of proteins in the cell. The small ribosomal subunit (SSU) binds messenger RNAs (mRNAs) and translates the encoded message by selecting cognate aminoacyl-transfer RNA (tRNA) molecules. The large subunit (LSU) contains the ribosomal catalytic site termed the peptidyl transferase center (PTC), which catalyzes the formation of peptide bonds, thereby polymerizing the amino acids delivered by tRNAs into a polypeptide chain. The nascent polypeptides leave the ribosome through a tunnel in the LSU and interact with protein factors that function in enzymatic processing, targeting, and the membrane insertion of nascent chains at the exit of the ribosomal tunnel. RPL19A may play a role in the last stages of translation initiation, in particular subunit joining and shedding/releasing factors. In Candida albicans (strain SC5314 / ATCC MYA-2876) (Yeast), this protein is Large ribosomal subunit protein eL19.